Consider the following 325-residue polypeptide: Dimethylsulfide dehydrogenase subunit beta (325 aa).

4Fe-4S ferredoxin-type domains lie at 6–35 (ISMV…RNGR), 123–154 (SYYF…KRQE), and 156–185 (GIVL…FNEQ). The [4Fe-4S] cluster site is built by Cys-15, Cys-18, Cys-21, Cys-25, Cys-132, Cys-135, and Cys-140. Residues Cys-144, Cys-165, and Cys-171 each coordinate [3Fe-4S] cluster. The [4Fe-4S] cluster site is built by Cys-175, Cys-192, Cys-195, Cys-207, and Cys-211.

Heterotrimer of alpha, beta and gamma subunits. Requires [3Fe-4S] cluster as cofactor. The cofactor is [4Fe-4S] cluster.

Its subcellular location is the periplasm. Functionally, electron transfer subunit of the dehydrogenase during anaerobic growth on dimethyl sulfide. In Rhodovulum sulfidophilum (Rhodobacter sulfidophilus), this protein is Dimethylsulfide dehydrogenase subunit beta (ddhB).